The primary structure comprises 330 residues: PTS system mannose-specific EIIAB component (330 aa).

In terms of domain architecture, PTS EIIA type-4 spans 2–130 (GIGIIIASHG…NIIKESKDGI (129 aa)). Residue His-10 is the Tele-phosphohistidine intermediate; for EIIA activity of the active site. His-10 is modified (phosphohistidine; by HPr). Positions 143-161 (TAATEKVVNALQGAIPAGT) are hinge. The region spanning 166–330 (GKLKINLARV…FELIQKANIK (165 aa)) is the PTS EIIB type-4 domain. The active-site Pros-phosphohistidine intermediate; for EIIB activity is His-181. His-181 carries the post-translational modification Phosphohistidine; by EIIA.

As to quaternary structure, homodimer.

The protein localises to the cytoplasm. The protein resides in the cell membrane. It carries out the reaction D-mannose(out) + N(pros)-phospho-L-histidyl-[protein] = D-mannose 6-phosphate(in) + L-histidyl-[protein]. In terms of biological role, the phosphoenolpyruvate-dependent sugar phosphotransferase system (sugar PTS), a major carbohydrate active transport system, catalyzes the phosphorylation of incoming sugar substrates concomitantly with their translocation across the cell membrane. The enzyme II ManXYZ PTS system is involved in mannose transport. The sequence is that of PTS system mannose-specific EIIAB component from Streptococcus pyogenes serotype M6 (strain ATCC BAA-946 / MGAS10394).